The sequence spans 583 residues: Phosphoglucomutase, cytoplasmic (583 aa).

The tract at residues Met-1–Gly-20 is disordered. 2 residues coordinate alpha-D-glucose 1,6-bisphosphate: Arg-25 and Ser-124. Catalysis depends on Ser-124, which acts as the Phosphoserine intermediate. Mg(2+) contacts are provided by Ser-124, Asp-300, Asp-302, and Asp-304. At Ser-124 the chain carries Phosphoserine. Alpha-D-glucose 1,6-bisphosphate is bound by residues Asp-304, Arg-305, Thr-368, Glu-387, Ser-389, and Lys-400.

Belongs to the phosphohexose mutase family. In terms of assembly, monomer. Requires Mg(2+) as cofactor.

It is found in the cytoplasm. The enzyme catalyses alpha-D-glucose 1-phosphate = alpha-D-glucose 6-phosphate. The catalysed reaction is O-phospho-L-seryl-[protein] + alpha-D-glucose 1-phosphate = alpha-D-glucose 1,6-bisphosphate + L-seryl-[protein]. It catalyses the reaction alpha-D-glucose 1,6-bisphosphate + L-seryl-[protein] = O-phospho-L-seryl-[protein] + alpha-D-glucose 6-phosphate. Functionally, catalyzes the reversible isomerization of alpha-D-glucose 1-phosphate to alpha-D-glucose 6-phosphate. The mechanism proceeds via the intermediate compound alpha-D-glucose 1,6-bisphosphate. This enzyme participates in both the breakdown and synthesis of glucose. This chain is Phosphoglucomutase, cytoplasmic (PGM1), found in Mesembryanthemum crystallinum (Common ice plant).